The sequence spans 64 residues: Large ribosomal subunit protein bL35 (64 aa).

Over residues 1–14 the composition is skewed to basic residues; the sequence is MKQKTHKGAAKRIK. The tract at residues 1–50 is disordered; sequence MKQKTHKGAAKRIKISGSGKLRREQANRRHLLEGKPSKRTRRLKGTEDVA. The segment covering 21–36 has biased composition (basic and acidic residues); that stretch reads LRREQANRRHLLEGKP.

The protein belongs to the bacterial ribosomal protein bL35 family.

In Corynebacterium jeikeium (strain K411), this protein is Large ribosomal subunit protein bL35.